Reading from the N-terminus, the 1455-residue chain is Fanconi anemia group A protein (1455 aa).

Positions 18 to 34 (RRRAWAELLAGRVKREK) match the Nuclear localization signal motif. Phosphoserine is present on serine 1449.

Belongs to the multisubunit FA complex composed of FANCA, FANCB, FANCC, FANCE, FANCF, FANCG, FANCL/PHF9 and FANCM. The complex is not found in FA patients. In complex with FANCF, FANCG and FANCL, but not with FANCC, nor FANCE, interacts with HES1; this interaction may be essential for the stability and nuclear localization of FA core complex proteins. The complex with FANCC and FANCG may also include EIF2AK2 and HSP70. Interacts with FAAP20/C1orf86; interaction is direct. Post-translationally, phosphorylation is required for the formation of the nuclear complex. Not phosphorylated in cells derived from groups A, B, C, E, F, G, and H.

Its subcellular location is the nucleus. The protein resides in the cytoplasm. In terms of biological role, DNA repair protein that may operate in a postreplication repair or a cell cycle checkpoint function. May be involved in interstrand DNA cross-link repair and in the maintenance of normal chromosome stability. This is Fanconi anemia group A protein (FANCA) from Homo sapiens (Human).